A 181-amino-acid chain; its full sequence is Secreted chorismate mutase (181 aa).

An N-terminal signal peptide occupies residues 1-20; the sequence is MLASVALAALAGVGTPHATA. The Chorismate mutase domain maps to 21–100; it reads DDASPLVPLV…ATSSVEHTRF (80 aa). Substrate-binding positions include R36, K47, D56, 59-63, 92-96, and R121; these read REQQV and TSSVE. An intrachain disulfide couples C147 to C180.

As to quaternary structure, homodimer.

It localises to the secreted. The catalysed reaction is chorismate = prephenate. It participates in metabolic intermediate biosynthesis; prephenate biosynthesis; prephenate from chorismate: step 1/1. Its function is as follows. Catalyzes the Claisen rearrangement of chorismate to prephenate. May play some role in the pathogenicity. The protein is Secreted chorismate mutase of Mycolicibacterium smegmatis (strain ATCC 700084 / mc(2)155) (Mycobacterium smegmatis).